Reading from the N-terminus, the 127-residue chain is Aspartate 1-decarboxylase (127 aa).

Ser-25 serves as the catalytic Schiff-base intermediate with substrate; via pyruvic acid. The residue at position 25 (Ser-25) is a Pyruvic acid (Ser). Thr-57 contributes to the substrate binding site. Tyr-58 serves as the catalytic Proton donor. Residue 73–75 (GAA) coordinates substrate.

The protein belongs to the PanD family. Heterooctamer of four alpha and four beta subunits. The cofactor is pyruvate. Post-translationally, is synthesized initially as an inactive proenzyme, which is activated by self-cleavage at a specific serine bond to produce a beta-subunit with a hydroxyl group at its C-terminus and an alpha-subunit with a pyruvoyl group at its N-terminus.

It localises to the cytoplasm. It catalyses the reaction L-aspartate + H(+) = beta-alanine + CO2. The protein operates within cofactor biosynthesis; (R)-pantothenate biosynthesis; beta-alanine from L-aspartate: step 1/1. Functionally, catalyzes the pyruvoyl-dependent decarboxylation of aspartate to produce beta-alanine. This Neisseria meningitidis serogroup C / serotype 2a (strain ATCC 700532 / DSM 15464 / FAM18) protein is Aspartate 1-decarboxylase.